We begin with the raw amino-acid sequence, 41 residues long: Protein UL21 homolog (41 aa).

This sequence belongs to the herpesviridae UL21 family.

This Equine herpesvirus 4 (strain 1942) (EHV-4) protein is Protein UL21 homolog.